The following is a 216-amino-acid chain: GTPase IMAP family member GIMD1 (216 aa).

The AIG1-type G domain maps to 5–216 (KMIINLAVLG…ENHFQVLSFT (212 aa)). GTP-binding positions include 14–22 (GKTQSGKSS), S35, and 147–149 (HAE).

It belongs to the TRAFAC class TrmE-Era-EngA-EngB-Septin-like GTPase superfamily. AIG1/Toc34/Toc159-like paraseptin GTPase family. IAN subfamily.

This chain is GTPase IMAP family member GIMD1 (Gimd1), found in Rattus norvegicus (Rat).